The following is a 227-amino-acid chain: Probable septum site-determining protein MinC (227 aa).

This sequence belongs to the MinC family. Interacts with MinD and FtsZ.

In terms of biological role, cell division inhibitor that blocks the formation of polar Z ring septums. Rapidly oscillates between the poles of the cell to destabilize FtsZ filaments that have formed before they mature into polar Z rings. Prevents FtsZ polymerization. The polypeptide is Probable septum site-determining protein MinC (Geobacillus kaustophilus (strain HTA426)).